Consider the following 225-residue polypeptide: UPF0758 protein BcerKBAB4_4299 (225 aa).

Residues S103–I225 form the MPN domain. Zn(2+)-binding residues include H174, H176, and D187. Residues H174–D187 carry the JAMM motif motif.

Belongs to the UPF0758 family.

This Bacillus mycoides (strain KBAB4) (Bacillus weihenstephanensis) protein is UPF0758 protein BcerKBAB4_4299.